We begin with the raw amino-acid sequence, 260 residues long: MFEARLGQATILKKILDAIKDLLNEATFDCSDSGIQLQAMDNSHVSLVSLTLRSDGFDKFRCDRNLSMGMNLGSMAKILKCANNEDNVTMKAQDNADTVTIMFESANQEKVSDYEMKLMNLDQEHLGIPETDFSCVVRMPAMEFARICRDLAQFSESVVICCTKEGVKFSASGDVGTANIKLAQTGSVDKEEEAVIIEMQEPVTLTFACRYLNAFTKATPLSTQVQLSMCADVPLVVEYAIKDLGHIRYYLAPKIEDNET.

Residues 61–80 (RCDRNLSMGMNLGSMAKILK) mediate DNA binding.

The protein belongs to the PCNA family. In terms of assembly, homotrimer. Forms a complex with activator 1 heteropentamer in the presence of ATP. Interacts with E2f. Interacts with the catalytic subunits of two DNA polymerase complexes: PolD1 from the delta complex and PolE1/DNApol-epsilon255 from the epsilon complex. In terms of tissue distribution, expressed at high levels in adult ovary.

Its subcellular location is the nucleus. The protein resides in the chromosome. It is found in the cytoplasm. Functionally, likely to be an auxiliary protein of DNA polymerase delta complex and is probably involved in the control of DNA replication and repair by increasing the polymerase's processibility. In Drosophila melanogaster (Fruit fly), this protein is Proliferating cell nuclear antigen.